The primary structure comprises 153 residues: E3 ubiquitin-protein ligase AIRP1 (153 aa).

The RING-type; atypical zinc finger occupies 104 to 145; the sequence is CPICLEEYEIDNPKLLTKCGHDFHLACILAWMERSEACPVCD.

It localises to the cytoplasm. It is found in the cytosol. It catalyses the reaction S-ubiquitinyl-[E2 ubiquitin-conjugating enzyme]-L-cysteine + [acceptor protein]-L-lysine = [E2 ubiquitin-conjugating enzyme]-L-cysteine + N(6)-ubiquitinyl-[acceptor protein]-L-lysine.. Possesses E3 ubiquitin-protein ligase activity in vitro when associated with the E2 enzyme UBC8 in vitro. Plays combinatory roles with AIRP2 in the positive regulation of the abscisic acid-mediated drought stress response. The polypeptide is E3 ubiquitin-protein ligase AIRP1 (Arabidopsis thaliana (Mouse-ear cress)).